The sequence spans 910 residues: DNA mismatch repair protein MutS (910 aa).

615–622 (GPNMAGKS) contributes to the ATP binding site.

The protein belongs to the DNA mismatch repair MutS family.

This protein is involved in the repair of mismatches in DNA. It is possible that it carries out the mismatch recognition step. This protein has a weak ATPase activity. The polypeptide is DNA mismatch repair protein MutS (Clostridium perfringens (strain ATCC 13124 / DSM 756 / JCM 1290 / NCIMB 6125 / NCTC 8237 / Type A)).